We begin with the raw amino-acid sequence, 3380 residues long: Apolipophorins (3380 aa).

An N-terminal signal peptide occupies residues 1–21; the sequence is MGTPPHIWFLLILAISSGGLS. In terms of domain architecture, Vitellogenin spans 40–646; it reads YQKGQTYTYS…SQSSYLPRSV (607 aa). Residues Asn132, Asn649, Asn969, Asn2174, Asn2851, and Asn3177 are each glycosylated (N-linked (GlcNAc...) asparagine). Residues 2815–2979 form the VWFD domain; sequence ATAILLNSHH…NAWKVDAQCA (165 aa). An intrachain disulfide couples Cys2839 to Cys2978.

Post-translationally, cleaved into 2 chains by furin protease. However, prevention of cleavage does not impair its function. N-glycosylated. Present in brain, hemolymph, fat body and eyes.

Its subcellular location is the secreted. Functionally, constitutes the major component of lipophorin, which mediates transport for various types of lipids in hemolymph. Acts by forming lipoprotein particles that bind lipoproteins and lipids. May be required for morphogens wingless (wg) and hedgehog (hh) function, possibly by acting as vehicles for the movement of wg and hh. This chain is Apolipophorins, found in Locusta migratoria (Migratory locust).